The chain runs to 60 residues: Hemocyte defensin Cg-Defh1 (60 aa).

Positions 1–17 are cleaved as a signal peptide; it reads LFTLVVLLMVSADMAFA. Beta-D-GlcNAc-(1-&gt;4)-Mur2Ac(oyl-L-Ala-gamma-D-Glu-L-Lys-D-Ala-D-Ala)-di-trans,octa-cis-undecaprenyl diphosphate contacts are provided by Phe19, Gly20, and Cys21. 4 disulfide bridges follow: Cys21-Cys42, Cys28-Cys51, Cys32-Cys53, and Cys37-Cys56. The tract at residues 22-25 is binds to membrane interface; sequence PRDQ. A beta-D-GlcNAc-(1-&gt;4)-Mur2Ac(oyl-L-Ala-gamma-D-Glu-L-Lys-D-Ala-D-Ala)-di-trans,octa-cis-undecaprenyl diphosphate-binding site is contributed by His31. Residues 43-49 form a binds to membrane interface region; it reads DAVTLWL. Cys51 lines the beta-D-GlcNAc-(1-&gt;4)-Mur2Ac(oyl-L-Ala-gamma-D-Glu-L-Lys-D-Ala-D-Ala)-di-trans,octa-cis-undecaprenyl diphosphate pocket.

Belongs to the invertebrate defensin family. As to expression, expressed in hemocytes.

Its subcellular location is the secreted. The protein resides in the target cell membrane. Functionally, antibacterial peptide mostly active against Gram-positive bacteria. It acts by selectively inhibiting peptidoglycan biosynthesis through complex formation with the cell wall precursor lipid II (1:1 molar ratio) thus inhibiting cell wall synthesis. It does not disrupt cell membranes. Is noticeably less potent than Cg-Defh2 and Cg-Defm. Shows no or limited activities against Gram-negative bacteria. This chain is Hemocyte defensin Cg-Defh1, found in Magallana gigas (Pacific oyster).